The following is a 666-amino-acid chain: MLVKKLAGKGGGRESGSEDPRPLGQRCAGTMPSCTALATLLSVVAVAFCFYLGVKTNDLQARIAALESAKGTPSFHPLSDTVDELKAMVQEKVERLLAQKSYEHMAKIRTAREAPLECNCPAGPPGKRGKRGRRGESGPPGQPGPQGPPGPKGDKGEQGDQGPRMVFPKINHGFLSADQQLIKRRLIKGDQGQAGPPGPPGPPGPRGPPGDTGKDGPRGMPGVPGEPGKPGEQGLMGPLGPPGQKGSIGAPGTPGMDGQKGEPGSPGAAGQSGLPGPKGEPGKEGEKGDAGENGPKGDTGEKGDPGSSAAGIKGEPGESGRPGQKGEPGLPGLPGLPGIKGEPGFIGPQGEPGLPGLPGTKGDRGEAGPPGRGERGDPGAPGPKGKQGESGARGPKGSKGDRGDKGDSGALGPRGPPGQKGDPGATEIIDYNGNLHEALQRITTLTVTGPPGPPGPQGLQGPKGEQGSPGIPGVDGEQGLKGSKGDMGDPGVPGEKGGLGLPGLPGANGVKGEKGDTGLPGPQGPSIIGPPGPPGPHGPPGPMGPHGLPGPKGASGLDGKPGSRGADGPIGPHGPAGPKGERGEKGAMGEPGPRGPYGLPGKDGEPGLDGFPGPRGEKGDLGEKGEKGFRGVKGEKGEPGQPGLDGLDAPCQLGPDGLPMPGCWQK.

The disordered stretch occupies residues 1–24; sequence MLVKKLAGKGGGRESGSEDPRPLG. Residues 1 to 33 lie on the Cytoplasmic side of the membrane; sequence MLVKKLAGKGGGRESGSEDPRPLGQRCAGTMPS. Residues 11–21 are compositionally biased toward basic and acidic residues; that stretch reads GGRESGSEDPR. A helical; Signal-anchor for type II membrane protein transmembrane segment spans residues 34-54; sequence CTALATLLSVVAVAFCFYLGV. Topologically, residues 55-666 are extracellular; that stretch reads KTNDLQARIA…GLPMPGCWQK (612 aa). The segment at 116–168 is disordered; that stretch reads LECNCPAGPPGKRGKRGRRGESGPPGQPGPQGPPGPKGDKGEQGDQGPRMVFP. The 44-residue stretch at 121–164 folds into the Collagen-like 1 domain; sequence PAGPPGKRGKRGRRGESGPPGQPGPQGPPGPKGDKGEQGDQGPR. The segment covering 140-151 has biased composition (pro residues); the sequence is PGQPGPQGPPGP. The interaction with amyloid-beta peptide stretch occupies residues 181–188; that stretch reads LIKRRLIK. 2 disordered regions span residues 189-428 and 445-666; these read GDQG…ATEI and LTVT…CWQK. 7 Collagen-like domains span residues 192–247, 249–308, 311–370, 373–425, 455–514, 529–588, and 589–648; these read GQAG…QKGS, GAPG…PGSS, GIKG…AGPP, GERG…DPGA, GPQG…KGEK, GPPG…KGAM, and GEPG…DGLD. Residues 196-208 are compositionally biased toward pro residues; it reads PPGPPGPPGPRGP. A compositionally biased stretch (low complexity) spans 230–245; that stretch reads PGEQGLMGPLGPPGQK. The span at 280-290 shows a compositional bias: basic and acidic residues; it reads EPGKEGEKGDA. Low complexity predominate over residues 336–358; it reads LPGIKGEPGFIGPQGEPGLPGLP. Composition is skewed to basic and acidic residues over residues 361–377 and 398–407; these read KGDR…ERGD and SKGDRGDKGD. A compositionally biased stretch (low complexity) spans 457 to 466; that stretch reads QGLQGPKGEQ. Gly residues predominate over residues 494 to 503; sequence GEKGGLGLPG. A compositionally biased stretch (pro residues) spans 528-543; sequence IGPPGPPGPHGPPGPM. Over residues 615-638 the composition is skewed to basic and acidic residues; the sequence is RGEKGDLGEKGEKGFRGVKGEKGE.

Forms homodimers and homotrimers. Binds to the fibrillized forms of amyloid-beta protein 40 (beta-APP40) and amyloid-betad protein 42 (beta-APP42). Found associated with beta-APP42 more frequently than with beta-APP40. Undergoes proteolytic cleavage by furin protease to yield the soluble collagen-like Alzheimer amyloid plaque component. Post-translationally, glycosylated. In terms of processing, hydroxylated on proline and lysine residues. As to expression, expressed predominantly in neurons with low levels also detected in heart, testis and eye.

The protein resides in the membrane. Functionally, inhibits fibrillization of amyloid-beta peptide during the elongation phase. Has also been shown to assemble amyloid fibrils into protease-resistant aggregates. Binds heparin. The polypeptide is Collagen alpha-1(XXV) chain (Mus musculus (Mouse)).